We begin with the raw amino-acid sequence, 379 residues long: Glutamate 5-kinase (379 aa).

Lysine 19 serves as a coordination point for ATP. Residues serine 59, aspartate 146, and asparagine 158 each coordinate substrate. 178–179 (TD) lines the ATP pocket. In terms of domain architecture, PUA spans 285 to 363 (RGAVTVDAGA…SEFERLLGYV (79 aa)).

It belongs to the glutamate 5-kinase family.

The protein localises to the cytoplasm. The enzyme catalyses L-glutamate + ATP = L-glutamyl 5-phosphate + ADP. Its pathway is amino-acid biosynthesis; L-proline biosynthesis; L-glutamate 5-semialdehyde from L-glutamate: step 1/2. Its function is as follows. Catalyzes the transfer of a phosphate group to glutamate to form L-glutamate 5-phosphate. The protein is Glutamate 5-kinase of Variovorax paradoxus (strain S110).